Consider the following 32-residue polypeptide: uncharacterized protein (32 aa).

This is an uncharacterized protein from Ornithodoros (relapsing fever ticks).